The following is a 374-amino-acid chain: Dual-specificity RNA methyltransferase RlmN (374 aa).

Glutamate 94 functions as the Proton acceptor in the catalytic mechanism. The region spanning 100–339 (EEDRATLCVS…VTIRKTRGDD (240 aa)) is the Radical SAM core domain. Cysteines 107 and 344 form a disulfide. Residues cysteine 114, cysteine 118, and cysteine 121 each contribute to the [4Fe-4S] cluster site. Residues 168-169 (GE), serine 200, 222-224 (SLH), and asparagine 301 contribute to the S-adenosyl-L-methionine site. Cysteine 344 acts as the S-methylcysteine intermediate in catalysis.

It belongs to the radical SAM superfamily. RlmN family. The cofactor is [4Fe-4S] cluster.

It localises to the cytoplasm. It carries out the reaction adenosine(2503) in 23S rRNA + 2 reduced [2Fe-2S]-[ferredoxin] + 2 S-adenosyl-L-methionine = 2-methyladenosine(2503) in 23S rRNA + 5'-deoxyadenosine + L-methionine + 2 oxidized [2Fe-2S]-[ferredoxin] + S-adenosyl-L-homocysteine. It catalyses the reaction adenosine(37) in tRNA + 2 reduced [2Fe-2S]-[ferredoxin] + 2 S-adenosyl-L-methionine = 2-methyladenosine(37) in tRNA + 5'-deoxyadenosine + L-methionine + 2 oxidized [2Fe-2S]-[ferredoxin] + S-adenosyl-L-homocysteine. Functionally, specifically methylates position 2 of adenine 2503 in 23S rRNA and position 2 of adenine 37 in tRNAs. m2A2503 modification seems to play a crucial role in the proofreading step occurring at the peptidyl transferase center and thus would serve to optimize ribosomal fidelity. In Vibrio vulnificus (strain CMCP6), this protein is Dual-specificity RNA methyltransferase RlmN.